We begin with the raw amino-acid sequence, 375 residues long: Putative glutamate--cysteine ligase 2 (375 aa).

It belongs to the glutamate--cysteine ligase type 2 family. YbdK subfamily.

It carries out the reaction L-cysteine + L-glutamate + ATP = gamma-L-glutamyl-L-cysteine + ADP + phosphate + H(+). Its function is as follows. ATP-dependent carboxylate-amine ligase which exhibits weak glutamate--cysteine ligase activity. This Sorangium cellulosum (strain So ce56) (Polyangium cellulosum (strain So ce56)) protein is Putative glutamate--cysteine ligase 2.